The primary structure comprises 139 residues: Metallothiol transferase FosB (139 aa).

A VOC domain is found at 4–119 (GINHITYSVS…DGHKLELHTG (116 aa)). Positions 7, 66, and 115 each coordinate Mg(2+). Glu115 functions as the Proton donor/acceptor in the catalytic mechanism.

This sequence belongs to the fosfomycin resistance protein family. FosB subfamily. As to quaternary structure, homodimer. The cofactor is Mg(2+).

The protein localises to the cytoplasm. Metallothiol transferase which confers resistance to fosfomycin by catalyzing the addition of a thiol cofactor to fosfomycin. L-cysteine is probably the physiological thiol donor. The polypeptide is Metallothiol transferase FosB (Staphylococcus haemolyticus).